The primary structure comprises 612 residues: Coagulation factor X-activating enzyme heavy chain (612 aa).

Positions 1–20 are cleaved as a signal peptide; sequence MMQVLLVTISLAVFPYQGSS. Positions 21-193 are cleaved as a propeptide — or 194; sequence IILESGNVND…KKASQLVATS (173 aa). In terms of domain architecture, Peptidase M12B spans 201–395; that stretch reads TFIELVIVVD…YKPKCILNPP (195 aa). Glutamate 204 is a Ca(2+) binding site. Residue asparagine 259 is glycosylated (N-linked (GlcNAc...) asparagine). A Ca(2+)-binding site is contributed by aspartate 286. 3 disulfide bridges follow: cysteine 310-cysteine 390, cysteine 350-cysteine 374, and cysteine 352-cysteine 357. Zn(2+) is bound at residue histidine 335. The active site involves glutamate 336. Zn(2+) contacts are provided by histidine 339 and histidine 345. N-linked (GlcNAc...) asparagine glycans are attached at residues asparagine 353 and asparagine 373. Positions 390, 393, 405, 408, 412, 415, and 418 each coordinate Ca(2+). The Disintegrin domain maps to 403 to 489; that stretch reads PPICGNEIWE…ECPADGFHAN (87 aa). A disulfide bond links cysteine 461 and cysteine 481. The short motif at 467–469 is the D/ECD-tripeptide element; that stretch reads ECD.

The protein belongs to the venom metalloproteinase (M12B) family. P-III subfamily. P-IIId sub-subfamily. In terms of assembly, heterotrimer; disulfide-linked. The heterotrimer consists of 1 heavy chain and 2 light chains (lectins): LC1 and LC2 (AC Q7T045 and AC Q696W1). The cofactor is Zn(2+). In terms of processing, N-glycosylated. Contains 8.0% of hexoses, 2.5% of hexosamines and 2.5% of sialic acids. In terms of tissue distribution, expressed by the venom gland.

The protein resides in the secreted. It catalyses the reaction Specifically activates several components of the blood clotting system, including coagulation factor X, coagulation factor IX and protein C by cleavage of Arg-|-Xaa bonds. Has no action on insulin B chain.. With respect to regulation, calcium is required for the activity of the heterotrimer. In terms of biological role, catalytic subunit of blood coagulation factor X-activating enzyme. Activates coagulation factor X (F10) by cleaving the Arg(234)-Ile(235) bond, activates coagulation factor IX (F9) by cleaving the Arg(226)-Val(227) bond and is also able to activate protein C (PROC). This Macrovipera lebetinus (Levantine viper) protein is Coagulation factor X-activating enzyme heavy chain.